Here is a 47-residue protein sequence, read N- to C-terminus: ATCAGQDKPCKVNCDCCGERGECVCGGPCICRQGNVFIAWSKLMTCK.

Cystine bridges form between Cys-3-Cys-17, Cys-10-Cys-23, Cys-14-Cys-46, Cys-16-Cys-31, and Cys-25-Cys-29.

Expressed by the venom gland.

Its subcellular location is the secreted. Inhibits the inactivation of voltage-gated sodium channels (Nav). The chain is Delta-ctenitoxin-Asp2e from Ancylometes sp. (South American fishing spider).